The sequence spans 246 residues: Predicted GPI-anchored protein 33 (246 aa).

The N-terminal stretch at 1–16 (MRGIILLSFVLTSCLA) is a signal peptide. The N-linked (GlcNAc...) asparagine glycan is linked to asparagine 214. Asparagine 219 carries the GPI-anchor amidated asparagine lipid modification. A propeptide spans 220-246 (AAGVYSTNSVLVFVSICIGFIGGSLGI) (removed in mature form).

It localises to the cell membrane. In Candida albicans (strain SC5314 / ATCC MYA-2876) (Yeast), this protein is Predicted GPI-anchored protein 33 (PGA33).